The primary structure comprises 600 residues: Molybdenum cofactor biosynthesis protein moc-5 (600 aa).

A molybdenum cofactor biosynthesis protein A region spans residues 4 to 371; sequence RAGKKLFQWS…AVNNKKARHA (368 aa). The 217-residue stretch at 68 to 284 folds into the Radical SAM core domain; sequence MFMREHTYLR…VDKYGDGVIR (217 aa). Arginine 77 contacts GTP. 2 residues coordinate [4Fe-4S] cluster: cysteine 84 and cysteine 88. Residue tyrosine 90 participates in S-adenosyl-L-methionine binding. Cysteine 91 lines the [4Fe-4S] cluster pocket. Arginine 127 contacts GTP. S-adenosyl-L-methionine is bound at residue glycine 131. Threonine 158 lines the GTP pocket. Serine 182 is a binding site for S-adenosyl-L-methionine. Lysine 218 is a binding site for GTP. Methionine 252 is an S-adenosyl-L-methionine binding site. Cysteine 316 and cysteine 319 together coordinate [4Fe-4S] cluster. 321 to 323 lines the GTP pocket; it reads RLR. Residue cysteine 333 coordinates [4Fe-4S] cluster. The segment at 369–390 is disordered; the sequence is RHAVFRNGRSEEPAKSSNDSYR. The interval 396–595 is molybdenum cofactor biosynthesis protein C; it reads TSASSILVHL…SGGKTTYTID (200 aa). The active-site For molybdenum cofactor biosynthesis protein C activity is aspartate 566.

The protein in the C-terminal section; belongs to the MoaC family. This sequence in the N-terminal section; belongs to the radical SAM superfamily. MoaA family. As to quaternary structure, isoform a and isoform b probably form a heterooligomer. The cofactor is [4Fe-4S] cluster.

The catalysed reaction is GTP + AH2 + S-adenosyl-L-methionine = (8S)-3',8-cyclo-7,8-dihydroguanosine 5'-triphosphate + 5'-deoxyadenosine + L-methionine + A + H(+). It carries out the reaction (8S)-3',8-cyclo-7,8-dihydroguanosine 5'-triphosphate = cyclic pyranopterin phosphate + diphosphate. Its pathway is cofactor biosynthesis; molybdopterin biosynthesis. Its function is as follows. Probably forms a complex with isoform b that catalyzes the conversion of 5'-GTP to cyclic pyranopterin monophosphate (cPMP). Catalyzes the cyclization of GTP to (8S)-3',8-cyclo-7,8-dihydroguanosine 5'-triphosphate and mocs1b catalyzes the subsequent conversion of (8S)-3',8-cyclo-7,8-dihydroguanosine 5'-triphosphate to cPMP. Functionally, probably forms a complex with isoform a that catalyzes the conversion of 5'-GTP to cyclic pyranopterin monophosphate (cPMP). This is Molybdenum cofactor biosynthesis protein moc-5 from Caenorhabditis elegans.